The following is a 273-amino-acid chain: Eukaryotic translation initiation factor 3 subunit J (273 aa).

Positions methionine 1–glutamate 158 are disordered. A compositionally biased stretch (acidic residues) spans aspartate 34–valine 54. Residues glutamate 50–serine 97 adopt a coiled-coil conformation. A compositionally biased stretch (basic and acidic residues) spans glutamate 55–alanine 75. Residues glutamate 95–threonine 104 are compositionally biased toward acidic residues. Positions glutamate 105–aspartate 126 are enriched in basic and acidic residues.

This sequence belongs to the eIF-3 subunit J family. In terms of assembly, component of the eukaryotic translation initiation factor 3 (eIF-3) complex.

Its subcellular location is the cytoplasm. Its function is as follows. Component of the eukaryotic translation initiation factor 3 (eIF-3) complex, which is involved in protein synthesis of a specialized repertoire of mRNAs and, together with other initiation factors, stimulates binding of mRNA and methionyl-tRNAi to the 40S ribosome. The eIF-3 complex specifically targets and initiates translation of a subset of mRNAs involved in cell proliferation. This chain is Eukaryotic translation initiation factor 3 subunit J, found in Pyricularia oryzae (strain 70-15 / ATCC MYA-4617 / FGSC 8958) (Rice blast fungus).